We begin with the raw amino-acid sequence, 261 residues long: uncharacterized protein (261 aa).

Residues Met-1 to Gly-22 form the signal peptide. A lipid anchor (N-palmitoyl cysteine) is attached at Cys-23. Residue Cys-23 is the site of S-diacylglycerol cysteine attachment.

Belongs to the staphylococcal tandem lipoprotein family.

The protein resides in the cell membrane. This is an uncharacterized protein from Staphylococcus aureus (strain N315).